We begin with the raw amino-acid sequence, 707 residues long: Polyribonucleotide nucleotidyltransferase (707 aa).

D486 and D492 together coordinate Mg(2+). The KH domain occupies 553 to 612; sequence PRIHTIKINPEKIKDVIGKGGSVIRALTEETGTTIEIEDDGTVKIAATDGDKAKHAIRRI. An S1 motif domain is found at 622–690; it reads GRIYQGKVTR…RQGRVRLSIK (69 aa).

The protein belongs to the polyribonucleotide nucleotidyltransferase family. In terms of assembly, component of the RNA degradosome, which is a multiprotein complex involved in RNA processing and mRNA degradation. It depends on Mg(2+) as a cofactor.

The protein resides in the cytoplasm. It carries out the reaction RNA(n+1) + phosphate = RNA(n) + a ribonucleoside 5'-diphosphate. In terms of biological role, involved in mRNA degradation. Catalyzes the phosphorolysis of single-stranded polyribonucleotides processively in the 3'- to 5'-direction. The protein is Polyribonucleotide nucleotidyltransferase of Edwardsiella ictaluri (strain 93-146).